The chain runs to 574 residues: Interleukin-22 receptor subunit alpha-1 (574 aa).

The signal sequence occupies residues 1 to 15 (MRTLLTILTVGSLAA). At 16–228 (HAPEDPSDLL…VKTLPDRTWT (213 aa)) the chain is on the extracellular side. Fibronectin type-III domains follow at residues 17–124 (APED…LKPP) and 141–221 (PTPT…RVKT). Cys-71 and Cys-79 are disulfide-bonded. N-linked (GlcNAc...) asparagine glycosylation is found at Asn-80 and Asn-172. A disulfide bond links Cys-128 and Cys-217. A helical membrane pass occupies residues 229-249 (YSFSGAFLFSMGFLVAVLCYL). Residues 250–574 (SYRYVTKPPA…GLALTVQWES (325 aa)) lie on the Cytoplasmic side of the membrane. Disordered regions lie at residues 388–440 (SSYA…AGSC), 454–489 (AMEE…EGTP), and 507–560 (HPMS…TELD). 2 positions are modified to phosphoserine: Ser-410 and Ser-414.

The protein belongs to the type II cytokine receptor family. Heterodimer with IL10RB and with IL20RB. IL22 binding to heterodimer is greater than binding to IL22RA1 alone. Interacts with FBXW12; the interaction promotes ubiquitination of IL22RA1. Ubiquitinated. As to expression, expressed in colon, liver, lung, pancreas and kidney. No expression in immune cells such as monocytes, T-cells, and NK-cells. Expressed in keratinocytes of normal skin as well as in psoriatic skin lesion. Detected in normal blood brain barrier endothelial cells as well as in multiple sclerosis lesions; Strongly expressed on central nervous system vessels within infiltrated multiple sclerosis lesions. Overexpressed in synovial fluid cells from rheumatoid arthritis and spondyloarthropathy patients.

Its subcellular location is the cell membrane. Component of the receptor for IL20, IL22 and IL24. Component of IL22 receptor formed by IL22RA1 and IL10RB enabling IL22 signaling via JAK/STAT pathways. IL22 also induces activation of MAPK1/MAPK3 and Akt kinases pathways. Component of one of the receptor for IL20 and IL24 formed by IL22RA1 and IL20RB also signaling through STATs activation. Mediates IL24 antiangiogenic activity as well as IL24 inhibitory effect on endothelial cell tube formation and differentiation. This Homo sapiens (Human) protein is Interleukin-22 receptor subunit alpha-1 (IL22RA1).